Here is a 1083-residue protein sequence, read N- to C-terminus: Ubiquitin carboxyl-terminal hydrolase 28 (1083 aa).

Positions 60–82 (DQRVKEPSHDTAATEPSEVEESA) are disordered. S67 is subject to Phosphoserine. The UIM domain maps to 97–116 (DNKDDLQAAIALSLLESPNI). Residue K99 forms a Glycyl lysine isopeptide (Lys-Gly) (interchain with G-Cter in SUMO2) linkage. Positions 162–656 (VGLKNVGNTC…SAYCLMYIND (495 aa)) constitute a USP domain. The active-site Nucleophile is C171. The residue at position 376 (S376) is a Phosphoserine. The disordered stretch occupies residues 483–539 (DLTAKESSSPKSCSQNAEGSFSSPEDALPNSEVMNGPFTSPHSSLEMPAPPPAPRTV). Positions 487 to 505 (KESSSPKSCSQNAEGSFSS) are enriched in polar residues. S556 carries the post-translational modification Phosphoserine. H606 functions as the Proton acceptor in the catalytic mechanism. Residues 703–728 (EEQSCKIPQMESSPNSSSQDFSTSQE) form a disordered region. The span at 714-728 (SSPNSSSQDFSTSQE) shows a compositional bias: low complexity. Position 720 is a phosphoserine (S720). T1054 carries the phosphothreonine modification.

Belongs to the peptidase C19 family. USP28 subfamily. As to quaternary structure, interacts with ZNF304. Interacts with PRKD1. Interacts with TP53BP1. Interacts with FBXW7; following DNA damage, dissociates from FBXW7 leading to degradation of MYC. In terms of processing, degraded upon nickel ion level or hypoxia exposure. Phosphorylated upon DNA damage at Ser-67 and Ser-720, by ATM or ATR. Phosphorylated by PRKD1.

It is found in the nucleus. The protein resides in the nucleoplasm. It catalyses the reaction Thiol-dependent hydrolysis of ester, thioester, amide, peptide and isopeptide bonds formed by the C-terminal Gly of ubiquitin (a 76-residue protein attached to proteins as an intracellular targeting signal).. Deubiquitinase involved in DNA damage response checkpoint and MYC proto-oncogene stability. Involved in DNA damage induced apoptosis by specifically deubiquitinating proteins of the DNA damage pathway such as CLSPN. Also involved in G2 DNA damage checkpoint, by deubiquitinating CLSPN, and preventing its degradation by the anaphase promoting complex/cyclosome (APC/C). In contrast, it does not deubiquitinate PLK1. Specifically deubiquitinates MYC in the nucleoplasm, leading to prevent MYC degradation by the proteasome: acts by specifically interacting with FBXW7 (FBW7alpha) in the nucleoplasm and counteracting ubiquitination of MYC by the SCF(FBXW7) complex. Deubiquitinates ZNF304, hence preventing ZNF304 degradation by the proteasome and leading to the activated KRAS-mediated promoter hypermethylation and transcriptional silencing of tumor suppressor genes (TSGs) in a subset of colorectal cancers (CRC) cells. This is Ubiquitin carboxyl-terminal hydrolase 28 (Usp28) from Rattus norvegicus (Rat).